A 265-amino-acid polypeptide reads, in one-letter code: Cell adhesion molecule CEACAM7 (265 aa).

Residues 1 to 35 (MGSPSACPYRVCIPWQGLLLTASLLTFWNLPNSAQ) form the signal peptide. Positions 36 to 142 (TNIDVVPFNV…EEVTRQFYVF (107 aa)) constitute an Ig-like V-type domain. Residues Asn-57, Asn-85, Asn-105, Asn-112, Asn-174, Asn-183, and Asn-198 are each glycosylated (N-linked (GlcNAc...) asparagine). The 88-residue stretch at 146–233 (PKPSITSNNF…ASRSDPVTLN (88 aa)) folds into the Ig-like C2-type domain. Cys-168 and Cys-216 are disulfide-bonded. The GPI-anchor amidated serine moiety is linked to residue Ser-242. Positions 243–265 (SPDLSAGTAVSIMIGVLAGMALI) are cleaved as a propeptide — removed in mature form.

This sequence belongs to the immunoglobulin superfamily. CEA family. As to quaternary structure, homodimer. In terms of tissue distribution, expressed in columnar epithelial cells of the colon (at protein level). Strongly down-regulated in colonic adenocarcinomas.

It is found in the cell membrane. It localises to the apical cell membrane. The chain is Cell adhesion molecule CEACAM7 from Homo sapiens (Human).